The sequence spans 294 residues: Nucleotide-binding protein Adeh_0147 (294 aa).

Position 17-24 (17-24 (GVSGSGKS)) interacts with ATP. Residue 68 to 71 (DARE) coordinates GTP.

This sequence belongs to the RapZ-like family.

Its function is as follows. Displays ATPase and GTPase activities. The sequence is that of Nucleotide-binding protein Adeh_0147 from Anaeromyxobacter dehalogenans (strain 2CP-C).